We begin with the raw amino-acid sequence, 316 residues long: tRNA dimethylallyltransferase (316 aa).

17-24 serves as a coordination point for ATP; the sequence is GPTASGKT. 19 to 24 is a binding site for substrate; the sequence is TASGKT. Interaction with substrate tRNA regions lie at residues 42 to 45, 166 to 170, and 247 to 252; these read DSAL, QRLSR, and RCVGYR.

This sequence belongs to the IPP transferase family. As to quaternary structure, monomer. It depends on Mg(2+) as a cofactor.

It catalyses the reaction adenosine(37) in tRNA + dimethylallyl diphosphate = N(6)-dimethylallyladenosine(37) in tRNA + diphosphate. Functionally, catalyzes the transfer of a dimethylallyl group onto the adenine at position 37 in tRNAs that read codons beginning with uridine, leading to the formation of N6-(dimethylallyl)adenosine (i(6)A). The chain is tRNA dimethylallyltransferase from Klebsiella pneumoniae (strain 342).